The primary structure comprises 404 residues: Serine/threonine transporter SstT (404 aa).

A run of 8 helical transmembrane segments spans residues 10 to 30, 53 to 73, 81 to 101, 140 to 160, 177 to 197, 215 to 235, 287 to 307, and 329 to 349; these read ILGG…ICLA, AIAP…KEVG, ILVM…ILSY, AITN…GIAL, AVSF…FGLV, LLAV…PLLV, IAIP…ITVL, and IVAS…LLLI.

Belongs to the dicarboxylate/amino acid:cation symporter (DAACS) (TC 2.A.23) family.

The protein resides in the cell inner membrane. The enzyme catalyses L-serine(in) + Na(+)(in) = L-serine(out) + Na(+)(out). It carries out the reaction L-threonine(in) + Na(+)(in) = L-threonine(out) + Na(+)(out). Functionally, involved in the import of serine and threonine into the cell, with the concomitant import of sodium (symport system). This chain is Serine/threonine transporter SstT, found in Glaesserella parasuis serovar 5 (strain SH0165) (Haemophilus parasuis).